A 551-amino-acid chain; its full sequence is MGCLCINLKKKVKKPTPDISGEQNTEVKSREITPKEQPRQRQPAPRAKFQIVVQPHKLPLPLPQPQEKQKLINHQKQSTLQQPEPILGRPFEDIKEKYSLGRELGRGQFGITYICTEISSGKNFACKSILKRKLIRTKDREDVRREIQIMHYLSGQPNIVEIKGAYEDRQSVHLVMELCEGGELFDKITKRGHYSEKAAAEIIRSVVKVVQICHFMGVIHRDLKPENFLLSSKDEASSMLKATDFGVSVFIEEGKVYEDIVGSAYYVAPEVLKRNYGKAIDIWSAGVILYILLCGNPPFWAETDKGIFEEILRGEIDFESEPWPSISESAKDLVRNMLKYDPKKRFTAAQVLEHPWIREGGEASDKPIDSAVLSRMKQLRAMNKLKKLAFKFIAQNLKEEELKGLKTMFANMDTDKSGTITYDELKSGLEKLGSRLTETEVKQLLEDADVDGNGTIDYIEFISATMNRFRVEREDNLFKAFQHFDKDNSGFISRQELETAMKEYNMGDDIMIKEIISEVDADNDGSINYQEFCNMMKSCSQSHQSKLVQPN.

A lipid anchor (N-myristoyl glycine) is attached at Gly-2. Positions 12–46 (VKKPTPDISGEQNTEVKSREITPKEQPRQRQPAPR) are disordered. Residues 25–39 (TEVKSREITPKEQPR) show a composition bias toward basic and acidic residues. Residues 98–357 (YSLGRELGRG…AAQVLEHPWI (260 aa)) form the Protein kinase domain. Residues 104–112 (LGRGQFGIT) and Lys-127 contribute to the ATP site. Residue Asp-222 is the Proton acceptor of the active site. A Phosphoserine modification is found at Ser-263. The interval 363 to 393 (ASDKPIDSAVLSRMKQLRAMNKLKKLAFKFI) is autoinhibitory domain. EF-hand domains follow at residues 400–435 (EELKGLKTMFANMDTDKSGTITYDELKSGLEKLGSR), 436–471 (LTETEVKQLLEDADVDGNGTIDYIEFISATMNRFRV), 472–507 (EREDNLFKAFQHFDKDNSGFISRQELETAMKEYNMG), and 512–542 (IKEIISEVDADNDGSINYQEFCNMMKSCSQS). Asp-413, Asp-415, Ser-417, Thr-419, Glu-424, Asp-449, Asp-451, Asn-453, Thr-455, Glu-460, Asp-485, Asp-487, Ser-489, Glu-496, Asp-520, Asp-522, Asp-524, Ser-526, and Glu-531 together coordinate Ca(2+).

Belongs to the protein kinase superfamily. Ser/Thr protein kinase family. CDPK subfamily.

It is found in the membrane. It catalyses the reaction L-seryl-[protein] + ATP = O-phospho-L-seryl-[protein] + ADP + H(+). The catalysed reaction is L-threonyl-[protein] + ATP = O-phospho-L-threonyl-[protein] + ADP + H(+). Activated by calcium. Autophosphorylation may play an important role in the regulation of the kinase activity. May play a role in signal transduction pathways that involve calcium as a second messenger. The sequence is that of Calcium-dependent protein kinase 19 (CPK19) from Arabidopsis thaliana (Mouse-ear cress).